Consider the following 354-residue polypeptide: Protein-arginine kinase (354 aa).

Residues 24 to 254 (IVLSSRIRLA…QQIIQQEKLA (231 aa)) form the Phosphagen kinase C-terminal domain. ATP is bound by residues 27–31 (SSRIR), His92, Arg125, 176–180 (RASVM), and 207–212 (RGIYGE). The RDXXRA motif of the pArg binding pocket involved in allosteric regulation motif lies at 337–342 (RDYRRA).

It belongs to the ATP:guanido phosphotransferase family.

It carries out the reaction L-arginyl-[protein] + ATP = N(omega)-phospho-L-arginyl-[protein] + ADP + H(+). Appears to be allosterically activated by the binding of pArg-containing polypeptides to the pArg-binding pocket localized in the C-terminal domain of McsB. In terms of biological role, catalyzes the specific phosphorylation of arginine residues in a large number of proteins. Is part of the bacterial stress response system. Protein arginine phosphorylation has a physiologically important role and is involved in the regulation of many critical cellular processes, such as protein homeostasis, motility, competence, and stringent and stress responses, by regulating gene expression and protein activity. In Bacillus cereus (strain B4264), this protein is Protein-arginine kinase.